A 546-amino-acid chain; its full sequence is Peptidoglycan transport ATP-binding protein YejF (546 aa).

ABC transporter domains follow at residues 12–261 and 291–530; these read VRDL…RHLL and IKAG…KALL. Residues 46-53 and 323-330 each bind ATP; these read GESGSGKS and GESGSGKT.

It belongs to the ABC transporter superfamily. As to quaternary structure, the complex is composed of one ATP-binding protein (YejF), two transmembrane proteins (YejB and YejE) and a solute-binding protein (YepA or YejA).

Its subcellular location is the cell inner membrane. Part of the ABC transporter complex YejBEF-YepA involved in the uptake of muropeptides, the breakdown products of cell wall peptidoglycan. The import of muropeptides into the cell enables peptidoglycan recycling, which is vital for cell wall integrity in this bacterium. Is also probably part of the ABC transporter complex YejABEF, which is likely involved in broad-spectrum peptide import. Responsible for energy coupling to the transport system. In Agrobacterium fabrum (strain C58 / ATCC 33970) (Agrobacterium tumefaciens (strain C58)), this protein is Peptidoglycan transport ATP-binding protein YejF.